Here is a 299-residue protein sequence, read N- to C-terminus: Non-homologous end joining protein Ku (299 aa).

The 179-residue stretch at 10 to 188 folds into the Ku domain; sequence ISFGLVHIPV…TEAVTDARLT (179 aa). Disordered stretches follow at residues 227-249 and 261-299; these read AGEG…SADV and AGKS…GKAS. Residues 273-283 show a composition bias toward basic and acidic residues; that stretch reads AAKDKVADKQS. Basic residues predominate over residues 284–299; the sequence is PKPKRPAVRKKTGKAS.

The protein belongs to the prokaryotic Ku family. In terms of assembly, homodimer. Interacts with LigD.

Functionally, with LigD forms a non-homologous end joining (NHEJ) DNA repair enzyme, which repairs dsDNA breaks with reduced fidelity. Binds linear dsDNA with 5'- and 3'- overhangs but not closed circular dsDNA nor ssDNA. Recruits and stimulates the ligase activity of LigD. The protein is Non-homologous end joining protein Ku of Pseudomonas syringae pv. tomato (strain ATCC BAA-871 / DC3000).